A 486-amino-acid chain; its full sequence is ATP synthase subunit beta (486 aa).

Basic and acidic residues predominate over residues 1–12; it reads MTTTAEKTDRPG. The tract at residues 1-22 is disordered; that stretch reads MTTTAEKTDRPGKPGSSDTSGR. An ATP-binding site is contributed by 171–178; sequence GGAGVGKT.

It belongs to the ATPase alpha/beta chains family. F-type ATPases have 2 components, CF(1) - the catalytic core - and CF(0) - the membrane proton channel. CF(1) has five subunits: alpha(3), beta(3), gamma(1), delta(1), epsilon(1). CF(0) has three main subunits: a(1), b(2) and c(9-12). The alpha and beta chains form an alternating ring which encloses part of the gamma chain. CF(1) is attached to CF(0) by a central stalk formed by the gamma and epsilon chains, while a peripheral stalk is formed by the delta and b chains.

It localises to the cell membrane. It catalyses the reaction ATP + H2O + 4 H(+)(in) = ADP + phosphate + 5 H(+)(out). Its function is as follows. Produces ATP from ADP in the presence of a proton gradient across the membrane. The catalytic sites are hosted primarily by the beta subunits. The protein is ATP synthase subunit beta of Mycobacterium tuberculosis (strain ATCC 25177 / H37Ra).